The primary structure comprises 201 residues: Small ribosomal subunit protein uS4 (201 aa).

The tract at residues phenylalanine 26–lysine 45 is disordered. Residues serine 93–glutamine 153 form the S4 RNA-binding domain.

It belongs to the universal ribosomal protein uS4 family. In terms of assembly, part of the 30S ribosomal subunit. Contacts protein S5. The interaction surface between S4 and S5 is involved in control of translational fidelity.

In terms of biological role, one of the primary rRNA binding proteins, it binds directly to 16S rRNA where it nucleates assembly of the body of the 30S subunit. Its function is as follows. With S5 and S12 plays an important role in translational accuracy. The polypeptide is Small ribosomal subunit protein uS4 (Christiangramia forsetii (strain DSM 17595 / CGMCC 1.15422 / KT0803) (Gramella forsetii)).